The chain runs to 568 residues: Probable WRKY transcription factor 34 (568 aa).

The WRKY 1 DNA-binding region spans 172 to 236 (ACCAPADDGY…YTGDHIHSKP (65 aa)). Residues Cys203, Cys208, His231, and His233 each coordinate Zn(2+). Disordered regions lie at residues 230 to 252 (DHIHSKPPPNRRSGIGSSGTGQD) and 337 to 360 (KRRKLEAYATETSGSTRASREPRV). Positions 366–431 (SDIDILDDGY…YIGKHTHVVP (66 aa)) form a DNA-binding region, WRKY 2. 4 residues coordinate Zn(2+): Cys397, Cys402, His426, and His428.

It belongs to the WRKY group I family.

Its subcellular location is the nucleus. In terms of biological role, transcription factor. Interacts specifically with the W box (5'-(T)TGAC[CT]-3'), a frequently occurring elicitor-responsive cis-acting element. The sequence is that of Probable WRKY transcription factor 34 (WRKY34) from Arabidopsis thaliana (Mouse-ear cress).